The primary structure comprises 1353 residues: Trifunctional purine biosynthetic protein adenosine-3 (1353 aa).

Residues 114–321 (KDFMLRHGIP…LFDVMEACCS (208 aa)) form the ATP-grasp domain. ATP-binding positions include 193-196 (EELL), Glu200, Arg223, and Asn232. Mg(2+) contacts are provided by Glu291 and Asn293. The tract at residues 441 to 1155 (GLSYKDSGVD…QKMLSQRRKR (715 aa)) is AIRS domain. 2 positions are modified to phosphoserine: Ser814 and Ser816. The segment at 1153–1353 (RKRVAVLISG…ALISPEVSSQ (201 aa)) is GART domain. 1164 to 1166 (GSN) is a binding site for N(1)-(5-phospho-beta-D-ribosyl)glycinamide. Residues Arg1219, 1244-1247 (MRVL), and Asn1261 contribute to the (6R)-10-formyltetrahydrofolate site. Residue His1263 is the Proton donor of the active site. 1295 to 1299 (DEGVD) provides a ligand contact to (6R)-10-formyltetrahydrofolate. N(1)-(5-phospho-beta-D-ribosyl)glycinamide is bound at residue 1325–1328 (HKAE).

The protein in the N-terminal section; belongs to the GARS family. In the central section; belongs to the AIR synthase family. It in the C-terminal section; belongs to the GART family. In terms of assembly, homodimer. It depends on Mg(2+) as a cofactor. The cofactor is Mn(2+).

It carries out the reaction 5-phospho-beta-D-ribosylamine + glycine + ATP = N(1)-(5-phospho-beta-D-ribosyl)glycinamide + ADP + phosphate + H(+). It catalyses the reaction 2-formamido-N(1)-(5-O-phospho-beta-D-ribosyl)acetamidine + ATP = 5-amino-1-(5-phospho-beta-D-ribosyl)imidazole + ADP + phosphate + H(+). The enzyme catalyses N(1)-(5-phospho-beta-D-ribosyl)glycinamide + (6R)-10-formyltetrahydrofolate = N(2)-formyl-N(1)-(5-phospho-beta-D-ribosyl)glycinamide + (6S)-5,6,7,8-tetrahydrofolate + H(+). It functions in the pathway purine metabolism; IMP biosynthesis via de novo pathway; 5-amino-1-(5-phospho-D-ribosyl)imidazole from N(2)-formyl-N(1)-(5-phospho-D-ribosyl)glycinamide: step 2/2. The protein operates within purine metabolism; IMP biosynthesis via de novo pathway; N(1)-(5-phospho-D-ribosyl)glycinamide from 5-phospho-alpha-D-ribose 1-diphosphate: step 2/2. Its pathway is purine metabolism; IMP biosynthesis via de novo pathway; N(2)-formyl-N(1)-(5-phospho-D-ribosyl)glycinamide from N(1)-(5-phospho-D-ribosyl)glycinamide (10-formyl THF route): step 1/1. Functionally, trifunctional enzyme that catalyzes three distinct reactions as part of the 'de novo' inosine monophosphate biosynthetic pathway. This is Trifunctional purine biosynthetic protein adenosine-3 from Drosophila melanogaster (Fruit fly).